Reading from the N-terminus, the 372-residue chain is O-methyltransferase bfoE (372 aa).

S-adenosyl-L-methionine is bound at residue Trp186. His285 serves as the catalytic Proton acceptor.

This sequence belongs to the class I-like SAM-binding methyltransferase superfamily. Cation-independent O-methyltransferase family.

It functions in the pathway secondary metabolite biosynthesis. In terms of biological role, cytochrome P450 monooxygenase; part of the gene cluster that mediates the biosynthesis of bifonsecin B, a dimeric gamma-naphthopyrone. The first step in the biosynthesis of bifonsecin B is the production of gamma-naphthopyrone precursor YWA1 by the non-reducing polyketide synthase albA, via condensation of one acetyl-CoA starter unit with 6 malonyl-CoA units. YWA1 is then methylated by bfoE at position C-6 to yield foncesin which is further methylated at position C-8 by bfoD to produce fonsecin B. A key enzyme in the biosynthetic pathway is the cytochrome P450 monooxygenase bfoB which catalyzes the oxidative dimerization of fonsecin B to bifonsecin B. Bfob also catalyzes the oxidative dimerization of rubrofusarin B into nigerone. The stereoselectivity of bfoB is influenced by the two natural monomeric substrates; homodimerization of fonsecin B yields a stereochemically pure biaryl, M-foncerine B, while rubrofusarin B yields a mixture of enantiomers M- and P-nigerone. The protein is O-methyltransferase bfoE of Aspergillus brasiliensis (strain CBS 101740 / IMI 381727 / IBT 21946).